Reading from the N-terminus, the 75-residue chain is Sec-independent protein translocase protein TatA (75 aa).

The chain crosses the membrane as a helical span at residues Met1–Gly21. Basic and acidic residues-rich tracts occupy residues Met43–Gln54 and Ala66–His75. Residues Met43 to His75 are disordered.

The protein belongs to the TatA/E family. The Tat system comprises two distinct complexes: a TatABC complex, containing multiple copies of TatA, TatB and TatC subunits, and a separate TatA complex, containing only TatA subunits. Substrates initially bind to the TatABC complex, which probably triggers association of the separate TatA complex to form the active translocon.

It is found in the cell inner membrane. Functionally, part of the twin-arginine translocation (Tat) system that transports large folded proteins containing a characteristic twin-arginine motif in their signal peptide across membranes. TatA could form the protein-conducting channel of the Tat system. This Aromatoleum aromaticum (strain DSM 19018 / LMG 30748 / EbN1) (Azoarcus sp. (strain EbN1)) protein is Sec-independent protein translocase protein TatA.